The chain runs to 78 residues: uncharacterized protein (78 aa).

A helical membrane pass occupies residues 21 to 43 (SPFLFGAPLVGGLLGGFLGSALF).

It is found in the membrane. This is an uncharacterized protein from Bacillus subtilis (strain 168).